Reading from the N-terminus, the 665-residue chain is SH3 domain-containing kinase-binding protein 1 (665 aa).

2 SH3 domains span residues 1–58 and 98–157; these read MVEA…EIKK and RRRR…ELSG. Residues S156, S159, S183, and S230 each carry the phosphoserine modification. The interval 159 to 200 is disordered; that stretch reads SDELGISQDEQLSKSSLRETTGSESDGGDSSSTKSEGANGTV. The span at 177-195 shows a compositional bias: low complexity; sequence ETTGSESDGGDSSSTKSEG. Phosphothreonine is present on T254. An SH3 3 domain is found at 267 to 328; it reads KSKDYCKVIF…PDNFVKLLPP (62 aa). Disordered stretches follow at residues 328 to 444 and 467 to 610; these read PDFE…LAGS and DSVV…AAVE. A compositionally biased stretch (basic and acidic residues) spans 355–390; that stretch reads TERKHEIKKIPPERPEMLPNRTEEKERPEREPKLDL. The residue at position 436 (S436) is a Phosphoserine. The segment covering 469 to 484 has biased composition (polar residues); sequence VVSSTEKLSHPTTSRP. The segment covering 491 to 510 has biased composition (low complexity); that stretch reads PPSQSLTSSSLSSPDIFDSP. 3 positions are modified to phosphoserine: S509, S511, and S521. Residues 517 to 531 show a composition bias toward basic and acidic residues; sequence EEHISLAHRGVDASK. The span at 535 to 546 shows a compositional bias: polar residues; it reads KTVTISQVSDNK. A compositionally biased stretch (low complexity) spans 564 to 582; the sequence is APLSSAAPSPLSSSLGTAG. At S587 the chain carries Phosphoserine. Residues 602-664 adopt a coiled-coil conformation; the sequence is AASSQAAVEE…VNDIKKALQS (63 aa).

In terms of assembly, can self-associate and form homotetramers. Interacts with CD2, F-actin capping protein, PIK3R3, GRB2, EGFR, MET, BLNK, MAP3K4, PDCD6IP, SPRY2, ARHGAP17, ARHGAP27, MAGI2, CRK, BCAR1, SOS1, ASAP1, ARAP3, HIP1R, SYNJ2, INPP5D and STAP1. Interacts with E3 ubiquitin-protein ligases CBL and CBLB, but does not interact with CBLC. Two molecules of SH3KBP1 seem to bind through their respective SH3 1 domain to one molecule of CBLB. The interaction with CBL or CBLB and EGFR is increased upon EGF stimulation. The interaction with CBL is attenuated by PDCD6IP. Interacts (via SH3 domains) with ARAP1. The interaction is independent of EGF and does not affect ARAP1 GTPase-activating activity but is involved in regulating ubiquitination and endocytic trafficking of EGFR. ARAP1 competes with CBL for binding to SH3KBP1 and prevents interaction of CBL with SH3KBP1; this is likely to regulate SH3KBP1-mediated internalization of EGFR. Interacts through its proline-rich region with the SH3 domain of endophilins SH3GL1, SH3GL2 and SH3GL3. The SH3KBP1-endophilin complex seems to associate with a complex containing the phosphorylated receptor (EGFR or MET) and phosphorylated CBL. Probably associates with ASAP1 and phosphorylated EGFR. Probably part of a complex consisting of at least SH3KBP1, ASAP1 and ARAP3. Interacts with focal adhesion kinases PTK2/FAK1 and PTK2B/PYK2, probably as a dimer. Interacts with DAB2 and probably associates with chathrin through its interaction with DAB2. Part of a complex consisting of SH3KBP1, DAB2, and clathrin heavy chain. DAB2 and clathrin dissociate from SH3KBP1 following growth factor treatment, enabling interaction with CBL. Interacts with DDN and probably associates with MAGI2 through its interaction with DDN. Interacts with the SH3 domains of SRC tyrosine-protein kinases SRC, LCK, LYN, FGR, FYN and HCK. Interacts with TRADD, BIRC2, TRAF1, TRAF2 and TNFR1, and the association with a TNFR1-associated complex upon stimulation with TNF-alpha seems to be mediated by SRC. Interacts (via SH3 domains) with SHKBP1 (via PXXXPR motifs). Interaction with CBL is abolished in the presence of SHKBP1. Interacts (via SH3 domains) with ZFP36 (via extreme C-terminal region). Interacts with MAP3K4; this interaction enhances the association with ZFP36. (Microbial infection) Interacts (via SH3 domains) with Chikungunya virus non-structural protein 3 (via C-terminus); this interaction plays a role in initiation of viral replication. Monoubiquitinated by CBL and CBLB after EGF stimulation; probably on its C-terminus. Ubiquitously expressed. Also expressed in some cancer cell lines.

Its subcellular location is the cytoplasm. It localises to the cytoskeleton. The protein localises to the cytoplasmic vesicle membrane. The protein resides in the synapse. It is found in the synaptosome. Its subcellular location is the cell junction. It localises to the focal adhesion. Adapter protein involved in regulating diverse signal transduction pathways. Involved in the regulation of endocytosis and lysosomal degradation of ligand-induced receptor tyrosine kinases, including EGFR and MET/hepatocyte growth factor receptor, through an association with CBL and endophilins. The association with CBL, and thus the receptor internalization, may be inhibited by an interaction with PDCD6IP and/or SPRY2. Involved in regulation of ligand-dependent endocytosis of the IgE receptor. Attenuates phosphatidylinositol 3-kinase activity by interaction with its regulatory subunit. May be involved in regulation of cell adhesion; promotes the interaction between TTK2B and PDCD6IP. May be involved in the regulation of cellular stress response via the MAPK pathways through its interaction with MAP3K4. Is involved in modulation of tumor necrosis factor mediated apoptosis. Plays a role in the regulation of cell morphology and cytoskeletal organization. Required in the control of cell shape and migration. Has an essential role in the stimulation of B cell activation. The protein is SH3 domain-containing kinase-binding protein 1 (SH3KBP1) of Homo sapiens (Human).